Here is a 415-residue protein sequence, read N- to C-terminus: Succinate--CoA ligase [GDP-forming] subunit beta, mitochondrial (415 aa).

The N-terminal 19 residues, 1–19 (MLRAAGNLSKSMMKSQRRF), are a transit peptide targeting the mitochondrion. The 231-residue stretch at 28–258 (KEILEKHGCS…SAAYRQKEIF (231 aa)) folds into the ATP-grasp domain. Residues glutamine 39, 72–74 (GRG), and valine 130 each bind GTP. 2 residues coordinate Mg(2+): asparagine 227 and aspartate 241. Residues asparagine 292 and 349–351 (GIV) contribute to the substrate site.

It belongs to the succinate/malate CoA ligase beta subunit family. GTP-specific subunit beta subfamily. In terms of assembly, heterodimer of an alpha and a beta subunit. The beta subunit determines specificity for GTP. The cofactor is Mg(2+).

It localises to the mitochondrion. It carries out the reaction GTP + succinate + CoA = succinyl-CoA + GDP + phosphate. It participates in carbohydrate metabolism; tricarboxylic acid cycle; succinate from succinyl-CoA (ligase route): step 1/1. GTP-specific succinyl-CoA synthetase functions in the citric acid cycle (TCA), coupling the hydrolysis of succinyl-CoA to the synthesis of GTP and thus represents the only step of substrate-level phosphorylation in the TCA. The beta subunit provides nucleotide specificity of the enzyme and binds the substrate succinate, while the binding sites for coenzyme A and phosphate are found in the alpha subunit. The sequence is that of Succinate--CoA ligase [GDP-forming] subunit beta, mitochondrial from Caenorhabditis elegans.